We begin with the raw amino-acid sequence, 82 residues long: uncharacterized protein (82 aa).

In terms of biological role, this protein may be involved in virus assembly. This is an uncharacterized protein from Sulfolobus spindle-shape virus 1 (SSV1).